A 27-amino-acid polypeptide reads, in one-letter code: Antimicrobial peptide 1 (27 aa).

In terms of tissue distribution, expressed by the skin glands.

It is found in the secreted. In terms of biological role, has very weak antimicrobial activity against Gram-positive bacterium S.aureus and Gram-negative bacterium E.coli and stronger activity against yeast C.albicans. Enhances the antibacterial activity of XT3. Has hemolytic activity against human red blood cells. The sequence is that of Antimicrobial peptide 1 from Xenopus tropicalis (Western clawed frog).